We begin with the raw amino-acid sequence, 396 residues long: Schizokinen exporter SchE (396 aa).

The N-terminal stretch at 1 to 25 is a signal peptide; the sequence is MLPKLILLATLYISQFIPTTFFIQA. The Cytoplasmic portion of the chain corresponds to 26-39; sequence LPVFMRQQKMSLDV. Residues 40 to 60 traverse the membrane as a helical segment; sequence IGFLGLLILPSGLKFLWSPFI. Over 61–73 the chain is Periplasmic; sequence DRYRLGKLGHYRG. A helical membrane pass occupies residues 74-94; that stretch reads WIICFQLLLISTMLVTAFIDI. Topologically, residues 95–104 are cytoplasmic; that stretch reads QDNLNAFLTC. The helical transmembrane segment at 105-127 threads the bilayer; that stretch reads MFLASLFSSSQDIATDALAVNLL. Topologically, residues 128–137 are periplasmic; the sequence is EPQERGLGNA. The chain crosses the membrane as a helical span at residues 138–158; it reads IQSGGNIFGAIIGGGVMLILL. Residues 159–162 lie on the Cytoplasmic side of the membrane; the sequence is DKIG. Residues 163–183 form a helical membrane-spanning segment; the sequence is WRYSLITLSIFMLINLVPILI. Residues 184–214 are Periplasmic-facing; sequence YREKSQHQLENSTFFRSYFQPFISFLSRPKA. Residues 215-235 form a helical membrane-spanning segment; the sequence is LPWLFVVLLYMMGDSVTSLMI. Over 236-251 the chain is Cytoplasmic; sequence RPLLVDRGLSLPDIGW. A helical transmembrane segment spans residues 252–272; that stretch reads ILGIVSYSARIVSALIAGLVI. Topologically, residues 273–281 are periplasmic; the sequence is VKLGRIKSL. The chain crosses the membrane as a helical span at residues 282 to 302; the sequence is IIFGFIADLTTLLYIIPAIGV. The Cytoplasmic portion of the chain corresponds to 303–304; the sequence is SS. A helical transmembrane segment spans residues 305-325; the sequence is LLVLYTVCIIVNATQSMAYTA. Topologically, residues 326–346 are periplasmic; sequence LLSAMMDKCEKNTAATDYTMQ. 2 helical membrane-spanning segments follow: residues 347 to 367 and 368 to 388; these read VSVM…LATT and MGYS…VFLI. At 389-396 the chain is on the periplasmic side; sequence TQEYGVSS.

It belongs to the major facilitator superfamily.

The protein resides in the cell inner membrane. Functionally, involved in the TolC-like protein HgdD-dependent secretion of schizokinen, a dihydroxamate-type siderophore. Transports schizokinen from the cytoplasm to the periplasm. This Nostoc sp. (strain PCC 7120 / SAG 25.82 / UTEX 2576) protein is Schizokinen exporter SchE.